We begin with the raw amino-acid sequence, 227 residues long: MGRGKIVIQKIDDSTSRQVTFSKRRKGLIKKAKELAILCDAEVCLIIFSNTDKLYDFASSSVKSTIERFNTAKMEEQELMNPASEVKFWQREAETLRQELHSLQENYRQLTGVELNGLSVKELQNIESQLEMSLRGIRMKREQILTNEIKELTRKRNLVHHENLELSRKVQRIHQENVELYKKAYGTSNTNGLGHHELVDAVYESHAQVRLQLSQPEQSHYKTSSNS.

Positions 3–57 (RGKIVIQKIDDSTSRQVTFSKRRKGLIKKAKELAILCDAEVCLIIFSNTDKLYDF) constitute an MADS-box domain. The K-box domain occupies 86–176 (VKFWQREAET…SRKVQRIHQE (91 aa)).

In terms of tissue distribution, preferentially expressed in roots.

Its subcellular location is the nucleus. Probable transcription factor. The polypeptide is Agamous-like MADS-box protein AGL17 (AGL17) (Arabidopsis thaliana (Mouse-ear cress)).